Reading from the N-terminus, the 215-residue chain is Adenylate kinase (215 aa).

10 to 15 (GAGKGT) provides a ligand contact to ATP. An NMP region spans residues 30–59 (STGDMFRKAIKDETDLGKEAKSYMDRGELV). Residues Thr-31, Arg-36, 57 to 59 (ELV), 85 to 88 (GFPR), and Gln-92 contribute to the AMP site. The segment at 126–163 (GRRICEKCGTTYHLVFNPPKVDGICDIDGGKLYQREDD) is LID. An ATP-binding site is contributed by Arg-127. Residues Cys-130 and Cys-133 each contribute to the Zn(2+) site. 136 to 137 (TY) provides a ligand contact to ATP. Zn(2+) is bound by residues Cys-150 and Asp-153. Arg-160 and Arg-171 together coordinate AMP. Lys-199 contacts ATP.

It belongs to the adenylate kinase family. As to quaternary structure, monomer.

The protein localises to the cytoplasm. The catalysed reaction is AMP + ATP = 2 ADP. Its pathway is purine metabolism; AMP biosynthesis via salvage pathway; AMP from ADP: step 1/1. Catalyzes the reversible transfer of the terminal phosphate group between ATP and AMP. Plays an important role in cellular energy homeostasis and in adenine nucleotide metabolism. In Staphylococcus epidermidis (strain ATCC 35984 / DSM 28319 / BCRC 17069 / CCUG 31568 / BM 3577 / RP62A), this protein is Adenylate kinase.